A 409-amino-acid polypeptide reads, in one-letter code: PPE family protein PPE32 (409 aa).

The protein belongs to the mycobacterial PPE family. As to quaternary structure, interacts with host Toll-like receptor 2 (TLR2).

The protein resides in the secreted. It localises to the cell wall. The protein localises to the cell surface. Virulence factor that modulates the production of host cytokines. The sequence is that of PPE family protein PPE32 from Mycobacterium tuberculosis (strain CDC 1551 / Oshkosh).